The sequence spans 727 residues: Malate synthase G (727 aa).

Acetyl-CoA contacts are provided by residues Val117, 124–125, Ser275, and Arg312; that span reads RY. Residue Arg339 is the Proton acceptor of the active site. Residues Arg339, Glu431, and 456–459 each bind glyoxylate; that span reads GFLD. The Mg(2+) site is built by Glu431 and Asp459. Pro540 is an acetyl-CoA binding site. Cys616 is subject to Cysteine sulfenic acid (-SOH). Asp630 serves as the catalytic Proton donor.

The protein belongs to the malate synthase family. GlcB subfamily. As to quaternary structure, monomer. Mg(2+) serves as cofactor.

Its subcellular location is the cytoplasm. It catalyses the reaction glyoxylate + acetyl-CoA + H2O = (S)-malate + CoA + H(+). Its pathway is carbohydrate metabolism; glyoxylate cycle; (S)-malate from isocitrate: step 2/2. In terms of biological role, involved in the glycolate utilization. Catalyzes the condensation and subsequent hydrolysis of acetyl-coenzyme A (acetyl-CoA) and glyoxylate to form malate and CoA. This Halalkalibacterium halodurans (strain ATCC BAA-125 / DSM 18197 / FERM 7344 / JCM 9153 / C-125) (Bacillus halodurans) protein is Malate synthase G.